A 113-amino-acid chain; its full sequence is U10-theraphotoxin-Hs2a (113 aa).

The first 21 residues, 1–21, serve as a signal peptide directing secretion; it reads MNTVRVTFLLVFVLAVSLGQA. A propeptide spanning residues 22 to 67 is cleaved from the precursor; the sequence is DEDGNRMEKRQKKTEAENLLLPKLEELDAKLWEEDSVESRNSRQKR. 3 disulfide bridges follow: Cys-68-Cys-86, Cys-75-Cys-91, and Cys-85-Cys-106.

Belongs to the neurotoxin 14 (magi-1) family. 02 (HWTX-XVIc) subfamily. In terms of tissue distribution, expressed by the venom gland.

The protein resides in the secreted. Functionally, probable ion channel inhibitor. In Cyriopagopus schmidti (Chinese bird spider), this protein is U10-theraphotoxin-Hs2a.